We begin with the raw amino-acid sequence, 254 residues long: tRNA (guanine-N(7)-)-methyltransferase (254 aa).

The tract at residues 1–34 (MNTNTPAHPPEGAPLSEATQAALASAEHAPDSPG) is disordered. 4 residues coordinate S-adenosyl-L-methionine: E87, E112, D139, and D162. D162 is an active-site residue. Residues K166, D198, and 233 to 236 (TKFE) contribute to the substrate site.

The protein belongs to the class I-like SAM-binding methyltransferase superfamily. TrmB family.

It carries out the reaction guanosine(46) in tRNA + S-adenosyl-L-methionine = N(7)-methylguanosine(46) in tRNA + S-adenosyl-L-homocysteine. The protein operates within tRNA modification; N(7)-methylguanine-tRNA biosynthesis. Its function is as follows. Catalyzes the formation of N(7)-methylguanine at position 46 (m7G46) in tRNA. The sequence is that of tRNA (guanine-N(7)-)-methyltransferase from Bordetella bronchiseptica (strain ATCC BAA-588 / NCTC 13252 / RB50) (Alcaligenes bronchisepticus).